Reading from the N-terminus, the 452-residue chain is Phosphoglucosamine mutase (452 aa).

Ser98 (phosphoserine intermediate) is an active-site residue. The Mg(2+) site is built by Ser98, Asp239, Asp241, and Asp243. Ser98 carries the post-translational modification Phosphoserine.

This sequence belongs to the phosphohexose mutase family. The cofactor is Mg(2+). Activated by phosphorylation.

It carries out the reaction alpha-D-glucosamine 1-phosphate = D-glucosamine 6-phosphate. Functionally, catalyzes the conversion of glucosamine-6-phosphate to glucosamine-1-phosphate. This is Phosphoglucosamine mutase from Anaplasma marginale (strain Florida).